The following is a 109-amino-acid chain: Protein ripply2 (109 aa).

Polar residues predominate over residues 1-15 (MENITFTSGLNSEMD). Disordered regions lie at residues 1–42 (MENI…RPAD) and 88–109 (YEDP…KELR). The short motif at 20–23 (WRPW) is the WRPW motif element. Over residues 30 to 42 (KAPDYKPYKRPAD) the composition is skewed to basic and acidic residues. The segment at 53 to 88 (HPVKLFWPKSQCFDYLYEDAEVLLRNYPVQATICLY) is ripply homology domain. Acidic residues predominate over residues 89–109 (EDPDTEDEEDYSDEEDEKELR).

The protein belongs to the ripply family. First expressed in the paraxial mesoderm at the 90% epiboly stage, and subsequently confined to the presomitic mesoderm. Expressed in the rostral compartment of S-I and S-II.

It is found in the nucleus. Plays a role in somitogenesis. Required for somite segregation and establishment of rostrocaudal polarity in somites. The polypeptide is Protein ripply2 (Danio rerio (Zebrafish)).